Reading from the N-terminus, the 446-residue chain is AQWGLLHCSLHLVANILTMATSNPSGSSGSSAGLGFQGQSQQHSTVNSMQGKRKALKLNFANPAFKSTAKFTLNPTIQSTHVMHKLDAIRKLETSYQKQDLRTSGAKALSTNEQATKNRLERLRTHSIESSGKLKLSPEQHWDFTAEDLKDLGEIGRGAYGSVNKMSHTPSGQIMAVKRIRSTVDEKEQKQLLMDLDVVMRSSDCPYIVQFYGALFREGDCWICMELMATSFDKFYKYVYSFLDDVIPEEILGKITLATVKALNHLKENLKIIHRDIKPSNILLDTNGNIKLCDFGISGQLVDSIAKTRDAGCRPYMAPERIDPSASRQGYDVRSDVWSLGITLYELATGRFPYPKWNSVFDQLTQVVKGDPPQLSNSEEREFSPSFTSFVNQCLTKDESKRPKYKELLKHPFILMYEERTVDVAGYVGKILEQMPVSPSSPMYVD.

Positions 27 to 42 are enriched in low complexity; that stretch reads SSGSSAGLGFQGQSQQ. The tract at residues 27-51 is disordered; the sequence is SSGSSAGLGFQGQSQQHSTVNSMQG. In terms of domain architecture, Protein kinase spans 149 to 414; the sequence is LKDLGEIGRG…YKELLKHPFI (266 aa). ATP is bound by residues 155–163 and lysine 178; that span reads IGRGAYGSV. Catalysis depends on aspartate 276, which acts as the Proton acceptor. Serine 304 carries the post-translational modification Phosphoserine; by RAF. A Phosphothreonine; by RAF modification is found at threonine 308.

This sequence belongs to the protein kinase superfamily. STE Ser/Thr protein kinase family. MAP kinase kinase subfamily. In terms of processing, MAPKK is itself dependent on Ser/Thr phosphorylation for activity catalyzed by MAP kinase kinase kinases. As to expression, expressed abundantly in the adult brain and muscle.

It carries out the reaction L-seryl-[protein] + ATP = O-phospho-L-seryl-[protein] + ADP + H(+). The enzyme catalyses L-threonyl-[protein] + ATP = O-phospho-L-threonyl-[protein] + ADP + H(+). The catalysed reaction is L-tyrosyl-[protein] + ATP = O-phospho-L-tyrosyl-[protein] + ADP + H(+). In terms of biological role, catalyzes the concomitant phosphorylation of a threonine and a tyrosine residue in a Thr-Glu-Tyr sequence located in MAP kinases. The chain is Dual specificity mitogen-activated protein kinase kinase 2 (map2k2) from Xenopus laevis (African clawed frog).